We begin with the raw amino-acid sequence, 347 residues long: Ribosomal RNA small subunit methyltransferase C (347 aa).

The protein belongs to the methyltransferase superfamily. RsmC family. In terms of assembly, monomer.

The protein resides in the cytoplasm. It catalyses the reaction guanosine(1207) in 16S rRNA + S-adenosyl-L-methionine = N(2)-methylguanosine(1207) in 16S rRNA + S-adenosyl-L-homocysteine + H(+). Functionally, specifically methylates the guanine in position 1207 of 16S rRNA in the 30S particle. This Serratia proteamaculans (strain 568) protein is Ribosomal RNA small subunit methyltransferase C.